Reading from the N-terminus, the 366-residue chain is Galactoside alpha-(1,2)-fucosyltransferase 1 (366 aa).

Residues 1–8 are Cytoplasmic-facing; the sequence is MWPLSHRH. Residues 9-25 traverse the membrane as a helical; Signal-anchor for type II membrane protein segment; the sequence is LCLAFLLVCVLSAISFF. The Lumenal segment spans residues 26-366; that stretch reads LHIHQDSIRH…LSPLWTLAEP (341 aa). Asn66, Asn302, and Asn328 each carry an N-linked (GlcNAc...) asparagine glycan.

Belongs to the glycosyltransferase 11 family.

The protein localises to the golgi apparatus. The protein resides in the golgi stack membrane. The enzyme catalyses a beta-D-galactosyl-(1-&gt;4)-N-acetyl-beta-D-glucosaminyl derivative + GDP-beta-L-fucose = an alpha-L-Fuc-(1-&gt;2)-beta-D-Gal-(1-&gt;4)-beta-D-GlcNAc derivative + GDP + H(+). The catalysed reaction is a ganglioside GA1 + GDP-beta-L-fucose = a ganglioside Fuc-GA1 + GDP + H(+). It carries out the reaction a beta-D-Gal-(1-&gt;3)-beta-D-GlcNAc-(1-&gt;3)-beta-D-Gal-(1-&gt;4)-beta-D-Glc-(1&lt;-&gt;1')-Cer(d18:1(4E)) + GDP-beta-L-fucose = alpha-L-fucosyl-(1-&gt;2)- beta-D-galactosyl-(1-&gt;3)-N-acetyl-beta-D-glucosaminyl-(1-&gt;3)-beta-D-galactosyl-(1-&gt;4)-beta-D-glucosyl-(1&lt;-&gt;1')-N-acylsphing-4-enine + GDP + H(+). It catalyses the reaction a neolactoside nLc4Cer(d18:1(4E)) + GDP-beta-L-fucose = a neolactoside IV(2)-alpha-Fuc-nLc4Cer(d18:1(4E)) + GDP + H(+). The enzyme catalyses a ganglioside GM1 + GDP-beta-L-fucose = a ganglioside Fuc-GM1 + GDP + H(+). The catalysed reaction is beta-D-galactosyl-(1-&gt;3)-N-acetyl-D-galactosamine + GDP-beta-L-fucose = alpha-L-fucosyl-(1-&gt;2)-beta-D-galactosyl-(1-&gt;3)-N-acetyl-D-galactosamine + GDP + H(+). It participates in protein modification; protein glycosylation. Functionally, catalyzes the transfer of L-fucose, from a guanosine diphosphate-beta-L-fucose, to the terminal galactose residue of glycoconjugates through an alpha(1,2) linkage leading to H antigen synthesis that is an intermediate substrate in the synthesis of ABO blood group antigens. H antigen is essential for maturation of the glomerular layer of the main olfactory bulb, in cell migration and early cell-cell contacts during tumor associated angiogenesis. Preferentially fucosylates soluble lactose and to a lesser extent fucosylates glycolipids gangliosides GA1 and GM1a. This chain is Galactoside alpha-(1,2)-fucosyltransferase 1, found in Aotus azarae (Azara's night monkey).